The primary structure comprises 392 residues: 23S rRNA (uracil(747)-C(5))-methyltransferase RlmC (392 aa).

Residues Cys-4, Cys-12, Cys-15, and Cys-93 each contribute to the [4Fe-4S] cluster site. S-adenosyl-L-methionine is bound by residues Gln-218, Phe-247, Glu-275, and Asn-321. The Nucleophile role is filled by Cys-348.

Belongs to the class I-like SAM-binding methyltransferase superfamily. RNA M5U methyltransferase family. RlmC subfamily.

It catalyses the reaction uridine(747) in 23S rRNA + S-adenosyl-L-methionine = 5-methyluridine(747) in 23S rRNA + S-adenosyl-L-homocysteine + H(+). Functionally, catalyzes the formation of 5-methyl-uridine at position 747 (m5U747) in 23S rRNA. The chain is 23S rRNA (uracil(747)-C(5))-methyltransferase RlmC from Haemophilus influenzae (strain PittEE).